The chain runs to 270 residues: uncharacterized protein (270 aa).

At 1–37 the chain is on the cytoplasmic side; it reads MATHTSKRRIHRWENNELSEENSTIIYFPARGLMWTH. A helical membrane pass occupies residues 38 to 58; that stretch reads FPFVLGICLEFVGYVLKIVFI. The Extracellular portion of the chain corresponds to 59–65; the sequence is NSPSIST. A helical transmembrane segment spans residues 66-86; sequence FIAQSVLLLIAPSLYALSIFM. Residues 87–93 lie on the Cytoplasmic side of the membrane; sequence LFSKMAR. The chain crosses the membrane as a helical span at residues 94–114; it reads LILMEAYMLIPAKFSTVSFVV. Topologically, residues 115–140 are extracellular; it reads ADMIGRVLQAVGGGLLSSWNSRNTGR. The helical transmembrane segment at 141-161 threads the bilayer; the sequence is ILIIVGLFIQIFCYTFLTFSQ. Over 162 to 181 the chain is Cytoplasmic; sequence LFLHYKMKATPSKIVRDSNE. A helical membrane pass occupies residues 182 to 202; sequence WFQYNFILLAGILLVNGRTIV. The Extracellular portion of the chain corresponds to 203 to 220; it reads RVVQFLMGLQSYIGQHEW. A helical transmembrane segment spans residues 221–241; sequence CLYVFDTVLMFLLPLIFLATF. Residues 242 to 270 are Cytoplasmic-facing; the sequence is RARNLFKLQDKSVNIQLNKLLDKESVSED.

The protein belongs to the lipid-translocating exporter (LTE) (TC 9.A.26.1) family.

The protein resides in the membrane. This is an uncharacterized protein from Saccharomyces cerevisiae (strain ATCC 204508 / S288c) (Baker's yeast).